Here is a 130-residue protein sequence, read N- to C-terminus: MSLDYCLMVTGPAYGNQRASSALQFARALLECGHRLGTVFFYQDGVHNANRLSAPAGDEVDLVRAWHELAQQHQVALHVCAAAALRRGVTDALQASLLKRSGENLQPGFELSGLGSLVQAALGCDRFIQF.

Cysteine 80 acts as the Cysteine persulfide intermediate in catalysis.

This sequence belongs to the DsrE/TusD family. In terms of assembly, heterohexamer, formed by a dimer of trimers. The hexameric TusBCD complex contains 2 copies each of TusB, TusC and TusD. The TusBCD complex interacts with TusE.

The protein resides in the cytoplasm. Its function is as follows. Part of a sulfur-relay system required for 2-thiolation of 5-methylaminomethyl-2-thiouridine (mnm(5)s(2)U) at tRNA wobble positions. Accepts sulfur from TusA and transfers it in turn to TusE. This is Sulfurtransferase TusD from Sodalis glossinidius (strain morsitans).